The chain runs to 151 residues: Cytochrome c-type biogenesis protein CcmE (151 aa).

At 1 to 9 (MKGLKKKRR) the chain is on the cytoplasmic side. A helical; Signal-anchor for type II membrane protein transmembrane segment spans residues 10–30 (IQIITLAFVALAGSTALIGYA). Residues 31–151 (MRDGINFFRS…FQHTEDQPQG (121 aa)) lie on the Periplasmic side of the membrane. Positions 123 and 127 each coordinate heme.

Belongs to the CcmE/CycJ family.

It localises to the cell inner membrane. Its function is as follows. Heme chaperone required for the biogenesis of c-type cytochromes. Transiently binds heme delivered by CcmC and transfers the heme to apo-cytochromes in a process facilitated by CcmF and CcmH. This Cereibacter sphaeroides (strain ATCC 17025 / ATH 2.4.3) (Rhodobacter sphaeroides) protein is Cytochrome c-type biogenesis protein CcmE.